We begin with the raw amino-acid sequence, 470 residues long: UDP-N-acetylmuramoylalanine--D-glutamate ligase (470 aa).

Position 121–127 (glycine 121–threonine 127) interacts with ATP.

This sequence belongs to the MurCDEF family.

Its subcellular location is the cytoplasm. The enzyme catalyses UDP-N-acetyl-alpha-D-muramoyl-L-alanine + D-glutamate + ATP = UDP-N-acetyl-alpha-D-muramoyl-L-alanyl-D-glutamate + ADP + phosphate + H(+). It participates in cell wall biogenesis; peptidoglycan biosynthesis. In terms of biological role, cell wall formation. Catalyzes the addition of glutamate to the nucleotide precursor UDP-N-acetylmuramoyl-L-alanine (UMA). The sequence is that of UDP-N-acetylmuramoylalanine--D-glutamate ligase from Rhizobium etli (strain ATCC 51251 / DSM 11541 / JCM 21823 / NBRC 15573 / CFN 42).